A 225-amino-acid polypeptide reads, in one-letter code: Flagellar transcriptional regulator FlhC (225 aa).

Residues Cys149, Cys152, Cys169, and Cys172 each coordinate Zn(2+).

This sequence belongs to the FlhC family. As to quaternary structure, heterohexamer composed of two FlhC and four FlhD subunits. Each FlhC binds a FlhD dimer, forming a heterotrimer, and a hexamer assembles by dimerization of two heterotrimers. Zn(2+) is required as a cofactor.

It is found in the cytoplasm. Its function is as follows. Functions in complex with FlhD as a master transcriptional regulator that regulates transcription of several flagellar and non-flagellar operons by binding to their promoter region. Activates expression of class 2 flagellar genes, including fliA, which is a flagellum-specific sigma factor that turns on the class 3 genes. Also regulates genes whose products function in a variety of physiological pathways. The sequence is that of Flagellar transcriptional regulator FlhC from Burkholderia lata (strain ATCC 17760 / DSM 23089 / LMG 22485 / NCIMB 9086 / R18194 / 383).